The primary structure comprises 2234 residues: RNA-directed RNA polymerase L (2234 aa).

The tract at residues 26–283 is endonuclease; sequence ITVVTSQTEM…INLSDEKLSC (258 aa). Mn(2+) is bound by residues glutamate 51, aspartate 89, and glutamate 102. Residue lysine 115 is part of the active site. The span at 879–891 shows a compositional bias: basic and acidic residues; it reads KRDDHMKDSEDSK. 2 disordered regions span residues 879–898 and 927–949; these read KRDDHMKDSEDSKQNLSSDL and KLKEKTEARQSSSGSSLKNQQKR. Positions 935–945 are enriched in polar residues; the sequence is RQSSSGSSLKN. One can recognise a RdRp catalytic domain in the interval 1184–1383; sequence MEMKMSVNLG…FISSKFNKFV (200 aa). Mg(2+) is bound at residue aspartate 1342.

It belongs to the Bunyavirales RNA polymerase family. As to quaternary structure, homomultimer; the oligomeric structure is essential for the polymerase activity. Interacts with nucleoprotein N. Interacts with protein Z; this interaction inhibits viral transcription and replication, Z partially blocks the product exit tunnel for the releasing nascent RNA product. The cofactor is Mn(2+). Requires Mg(2+) as cofactor.

It localises to the virion. The protein localises to the host cytoplasm. It catalyses the reaction RNA(n) + a ribonucleoside 5'-triphosphate = RNA(n+1) + diphosphate. RNA-dependent RNA polymerase, which is responsible for the replication and transcription of the viral RNA genome using antigenomic RNA as an intermediate. During transcription, synthesizes subgenomic RNAs and assures their capping by a cap-snatching mechanism, which involves the endonuclease activity cleaving the host capped pre-mRNAs. These short capped RNAs are then used as primers for viral transcription. The 3'-end of subgenomic mRNAs molecules are heterogeneous and not polyadenylated. The replicase function is to direct synthesis of antigenomic and genomic RNA which are encapsidated and non capped. As a consequence of the use of the same enzyme for both transcription and replication, these mechanisms need to be well coordinated. These processes may be regulated by proteins N and Z in a dose-dependent manner. Z protein inhibits the viral polymerase L und thus the viral transcription and RNA synthesis. This is RNA-directed RNA polymerase L from Bolomys (OLVV).